The chain runs to 279 residues: Thymidylate synthase (279 aa).

133–134 (RR) contacts dUMP. C154 (nucleophile) is an active-site residue. Residues 178–181 (RSND), N189, and 219–221 (HIY) contribute to the dUMP site. A (6R)-5,10-methylene-5,6,7,8-tetrahydrofolate-binding site is contributed by D181. Position 278 (A278) interacts with (6R)-5,10-methylene-5,6,7,8-tetrahydrofolate.

This sequence belongs to the thymidylate synthase family. Bacterial-type ThyA subfamily. Homodimer.

Its subcellular location is the cytoplasm. It catalyses the reaction dUMP + (6R)-5,10-methylene-5,6,7,8-tetrahydrofolate = 7,8-dihydrofolate + dTMP. The protein operates within pyrimidine metabolism; dTTP biosynthesis. Functionally, catalyzes the reductive methylation of 2'-deoxyuridine-5'-monophosphate (dUMP) to 2'-deoxythymidine-5'-monophosphate (dTMP) while utilizing 5,10-methylenetetrahydrofolate (mTHF) as the methyl donor and reductant in the reaction, yielding dihydrofolate (DHF) as a by-product. This enzymatic reaction provides an intracellular de novo source of dTMP, an essential precursor for DNA biosynthesis. This is Thymidylate synthase from Streptococcus gordonii (strain Challis / ATCC 35105 / BCRC 15272 / CH1 / DL1 / V288).